The sequence spans 1300 residues: Insulin receptor-related protein (1300 aa).

A signal peptide spans 1-26; that stretch reads MARPKLWPWGILLLVSLLSAGFNLDT. N-linked (GlcNAc...) asparagine glycosylation is present at Asn47. 9 cysteine pairs are disulfide-bonded: Cys214-Cys222, Cys216-Cys228, Cys229-Cys237, Cys233-Cys246, Cys249-Cys258, Cys262-Cys274, Cys280-Cys300, Cys304-Cys317, and Cys320-Cys324. N-linked (GlcNAc...) asparagine glycosylation occurs at Asn311. 8 N-linked (GlcNAc...) asparagine glycosylation sites follow: Asn411, Asn492, Asn528, Asn616, Asn634, Asn756, Asn885, and Asn898. Fibronectin type-III domains are found at residues 483–603 and 607–707; these read QTRT…TLPA and VPQD…AQEA. A disulfide bridge links Cys657 with Cys864. A disordered region spans residues 740-762; the sequence is DAGRHRRAIGSPRPGGNSSDFEI. Topologically, residues 747–921 are extracellular; it reads AIGSPRPGGN…PEEEDSGGLH (175 aa). A Fibronectin type-III 3 domain is found at 818-912; it reads IPGKLSWEAA…DSVAFYIPGP (95 aa). Residues 922 to 943 form a helical membrane-spanning segment; the sequence is ILLTVTPAGLMLLIILAALGFF. Topologically, residues 944–1300 are cytoplasmic; it reads YSRKRNGTLY…CSLQNGGPEH (357 aa). The Protein kinase domain maps to 979 to 1254; that stretch reads ISIIRELGQG…SIQKELRPSF (276 aa). Residues 985–993 and Lys1013 each bind ATP; that span reads LGQGSFGMV. The active-site Proton acceptor is the Asp1115. Phosphotyrosine; by autocatalysis is present on residues Tyr1145 and Tyr1146. Residues 1270 to 1300 are disordered; it reads GLQPTTDAESSSPPTSKGASDCSLQNGGPEH. Over residues 1272-1300 the composition is skewed to polar residues; that stretch reads QPTTDAESSSPPTSKGASDCSLQNGGPEH.

It belongs to the protein kinase superfamily. Tyr protein kinase family. Insulin receptor subfamily. Probable tetramer of 2 alpha and 2 beta chains linked by disulfide bonds. The alpha chains contribute to the formation of the ligand-binding domain, while the beta chains carry the kinase domain. Post-translationally, autophosphorylated on tyrosine residues between pH 7.9 and pH 10.5.

The protein localises to the membrane. It catalyses the reaction L-tyrosyl-[protein] + ATP = O-phospho-L-tyrosyl-[protein] + ADP + H(+). Its function is as follows. Receptor with tyrosine-protein kinase activity. Functions as a pH sensing receptor which is activated by increased extracellular pH. Activates an intracellular signaling pathway that involves IRS1 and AKT1/PKB. This chain is Insulin receptor-related protein (INSRR), found in Cavia porcellus (Guinea pig).